A 376-amino-acid polypeptide reads, in one-letter code: MKKIILVAGGTGGHFFPAVALGEELIKRGYEVHFITDLRCKQYIKQDMKVIFHILDLKRSGNIFLFLPRLSIAVLKAIKLLYNMKSAVTVGFGGYPVIAPMFAAIFLRVPIIIHEQNSYLGKVNKFFASFAKKIAISYEKIKNLPEFAKSKIVVTGGVVRENIRELKVIEMSSRGLTTGSKKSLIKALDSVVKPRNDKLFTIFIFGGSQGAKLFSELISASIQIVMQKQPSLELNIIQQAALDDQVKIKDIYSKLNITYEFAEFFDNMALQYKEADLVISRAGASTIEELTYIGLPAIFIPLPSAADNHQYYNAKLLEDKNAGWCLEQNNISAEKLADKILDLISNPKILEAASQNLLKRRKEGHKLLSNLIEEVI.

UDP-N-acetyl-alpha-D-glucosamine contacts are provided by residues 11–13 (TGG), Asn-117, Arg-160, Ser-208, and Gln-310.

This sequence belongs to the glycosyltransferase 28 family. MurG subfamily.

It localises to the cell inner membrane. It catalyses the reaction di-trans,octa-cis-undecaprenyl diphospho-N-acetyl-alpha-D-muramoyl-L-alanyl-D-glutamyl-meso-2,6-diaminopimeloyl-D-alanyl-D-alanine + UDP-N-acetyl-alpha-D-glucosamine = di-trans,octa-cis-undecaprenyl diphospho-[N-acetyl-alpha-D-glucosaminyl-(1-&gt;4)]-N-acetyl-alpha-D-muramoyl-L-alanyl-D-glutamyl-meso-2,6-diaminopimeloyl-D-alanyl-D-alanine + UDP + H(+). Its pathway is cell wall biogenesis; peptidoglycan biosynthesis. In terms of biological role, cell wall formation. Catalyzes the transfer of a GlcNAc subunit on undecaprenyl-pyrophosphoryl-MurNAc-pentapeptide (lipid intermediate I) to form undecaprenyl-pyrophosphoryl-MurNAc-(pentapeptide)GlcNAc (lipid intermediate II). In Rickettsia massiliae (strain Mtu5), this protein is UDP-N-acetylglucosamine--N-acetylmuramyl-(pentapeptide) pyrophosphoryl-undecaprenol N-acetylglucosamine transferase.